A 527-amino-acid polypeptide reads, in one-letter code: Putative ABC transporter peptide-binding protein BMEII0859 (527 aa).

The N-terminal stretch at 1–23 is a signal peptide; the sequence is MRLRNFYSALALSAAVFAGPLYA.

Belongs to the bacterial solute-binding protein 5 family. As to quaternary structure, the complex is composed of two ATP-binding proteins (BMEII0863 and BMEII0864), two transmembrane proteins (BMEII0860 and BMEII0861) and a solute-binding protein (BMEII0859).

It is found in the periplasm. Probably part of an ABC transporter complex that could be involved in peptide import. In Brucella melitensis biotype 1 (strain ATCC 23456 / CCUG 17765 / NCTC 10094 / 16M), this protein is Putative ABC transporter peptide-binding protein BMEII0859.